The sequence spans 49 residues: SPbeta prophage-derived uncharacterized protein YorN (49 aa).

The chain is SPbeta prophage-derived uncharacterized protein YorN (yorN) from Bacillus subtilis (strain 168).